Reading from the N-terminus, the 361-residue chain is MGNIHIQTKSKEYDVYVGKESLSHLTTIVQNMQPSVSNIMIISDEAVASLHLQTVVDALQIDQKVFSFVVPSGEKEKSFENFYAAHTSALENKLDRNSLIVALGGGMIGDLAGFVAASFMRGIRFVQVPTTLLAHDSAVGGKVAINHPLGKNMIGAFHQPEAVVYHTPFLQSLPEKEWRSGYAEVIKHALIGDVKLYHWLKEEVQTLADLRDEKLIHILTKAIPVKANIVAQDETEKGVRAHLNFGHTLGHALEKELGYGNITHGDGVAVGMLFAIFLSEQVYKVNLAYEEMKQWFLKYGYPKMPSDLSVERLVGLMKQDKKANAGTIHMVLMQEYGVVNVVSISDETVHIALEAFQKDMV.

NAD(+) contacts are provided by residues 72-77 (SGEKEK), 130-131 (TT), lysine 142, and lysine 151. Zn(2+) contacts are provided by glutamate 184, histidine 247, and histidine 264.

Belongs to the sugar phosphate cyclases superfamily. Dehydroquinate synthase family. Co(2+) is required as a cofactor. The cofactor is Zn(2+). It depends on NAD(+) as a cofactor.

Its subcellular location is the cytoplasm. It carries out the reaction 7-phospho-2-dehydro-3-deoxy-D-arabino-heptonate = 3-dehydroquinate + phosphate. Its pathway is metabolic intermediate biosynthesis; chorismate biosynthesis; chorismate from D-erythrose 4-phosphate and phosphoenolpyruvate: step 2/7. Catalyzes the conversion of 3-deoxy-D-arabino-heptulosonate 7-phosphate (DAHP) to dehydroquinate (DHQ). The chain is 3-dehydroquinate synthase from Bacillus cereus (strain AH820).